The primary structure comprises 999 residues: Probable basic-leucine zipper transcription factor N (999 aa).

2 stretches are compositionally biased toward low complexity: residues Met-1–Gln-79 and Asn-88–Asn-126. Residues Met-1–Asn-126 form a disordered region. 2 coiled-coil regions span residues Gln-148–Met-198 and Gly-232–Ser-282. The span at Glu-286–Leu-302 shows a compositional bias: polar residues. Disordered regions lie at residues Glu-286–Gln-406, Gln-450–Asn-533, and Glu-601–Gln-620. Over residues Ser-303–Asn-347 the composition is skewed to low complexity. Over residues Met-348 to Gln-406 the composition is skewed to polar residues. A coiled-coil region spans residues Ile-423–Gln-451. The segment covering Gln-450 to Gln-517 has biased composition (low complexity). Residues Glu-601–Leu-664 enclose the bZIP domain. The basic motif stretch occupies residues Lys-602 to Arg-632. Residues Ile-636–Leu-643 form a leucine-zipper region. 3 disordered regions span residues Lys-665 to Thr-711, Gln-779 to Glu-807, and Val-870 to Thr-899. Positions Ser-682–Gln-692 are enriched in acidic residues. Residues His-921–Leu-950 adopt a coiled-coil conformation.

Belongs to the bZIP family.

It is found in the nucleus. Functionally, probable transcriptional regulator. In Dictyostelium discoideum (Social amoeba), this protein is Probable basic-leucine zipper transcription factor N (bzpN).